Here is a 481-residue protein sequence, read N- to C-terminus: Cysteine--tRNA ligase (481 aa).

Zn(2+) is bound at residue C29. A 'HIGH' region motif is present at residues 31-41; it reads PTTYDYIHLGN. Zn(2+) contacts are provided by C209, H234, and E238. Residues 267–271 carry the 'KMSKS' region motif; the sequence is KMSKS. ATP is bound at residue K270.

Belongs to the class-I aminoacyl-tRNA synthetase family. As to quaternary structure, monomer. The cofactor is Zn(2+).

The protein resides in the cytoplasm. The enzyme catalyses tRNA(Cys) + L-cysteine + ATP = L-cysteinyl-tRNA(Cys) + AMP + diphosphate. The polypeptide is Cysteine--tRNA ligase (Heliobacterium modesticaldum (strain ATCC 51547 / Ice1)).